We begin with the raw amino-acid sequence, 113 residues long: Large ribosomal subunit protein uL22 (113 aa).

The protein belongs to the universal ribosomal protein uL22 family. Part of the 50S ribosomal subunit.

Functionally, this protein binds specifically to 23S rRNA; its binding is stimulated by other ribosomal proteins, e.g. L4, L17, and L20. It is important during the early stages of 50S assembly. It makes multiple contacts with different domains of the 23S rRNA in the assembled 50S subunit and ribosome. Its function is as follows. The globular domain of the protein is located near the polypeptide exit tunnel on the outside of the subunit, while an extended beta-hairpin is found that lines the wall of the exit tunnel in the center of the 70S ribosome. The chain is Large ribosomal subunit protein uL22 from Geobacillus stearothermophilus (Bacillus stearothermophilus).